The following is a 126-amino-acid chain: uncharacterized protein (126 aa).

Basic residues-rich tracts occupy residues 21 to 31 (RKKRKKRKKRR) and 41 to 83 (RILK…RKRR). The interval 21-83 (RKKRKKRKKR…RSPRKRRKRR (63 aa)) is disordered.

This is an uncharacterized protein from Saccharomyces cerevisiae (strain ATCC 204508 / S288c) (Baker's yeast).